A 383-amino-acid polypeptide reads, in one-letter code: MNGNRFGRMFQVTTYGESHGDAMGVTVSGCPAGLELEEADIQAELDRRKPGQSMITTSRGEPDAVEINSGVQDGYTTGTPIGMVIENKDARSGKYEPYVTAPRPSHGDFTYSAKFGTRNWGGGGRSSARETVNWVAAGAIAQKILTEYGIKAKAHVNQIGDIKAPPVTFEEMLEHTEENEVRCAHPETAERMRERIDEYQTEGDSIGGSIYFEARGVPAGLGAPRFDSLPARLGKAMFSVPATTSVEYGLGHEAREWRGSNRNEDWEFDEDGNPIPEGNTHGGLQGGITTGQPIYGEATWHAPTSIPKEQQTVDWETGEQKDIQVVGRHDPVLPPRAVPVVEAMLNITILDFMLLDGQINPDRLDDNPGQYETEYHPSSPQTN.

An NADP(+)-binding site is contributed by Arg-48. Residues 125-127, Gly-286, 301-305, and Arg-328 contribute to the FMN site; these read RSS and HAPTS. The interval 361 to 383 is disordered; sequence PDRLDDNPGQYETEYHPSSPQTN.

It belongs to the chorismate synthase family. FMNH2 serves as cofactor.

The enzyme catalyses 5-O-(1-carboxyvinyl)-3-phosphoshikimate = chorismate + phosphate. The protein operates within metabolic intermediate biosynthesis; chorismate biosynthesis; chorismate from D-erythrose 4-phosphate and phosphoenolpyruvate: step 7/7. Its function is as follows. Catalyzes the anti-1,4-elimination of the C-3 phosphate and the C-6 proR hydrogen from 5-enolpyruvylshikimate-3-phosphate (EPSP) to yield chorismate, which is the branch point compound that serves as the starting substrate for the three terminal pathways of aromatic amino acid biosynthesis. This reaction introduces a second double bond into the aromatic ring system. In Haloquadratum walsbyi (strain DSM 16790 / HBSQ001), this protein is Chorismate synthase.